A 270-amino-acid chain; its full sequence is Formamidopyrimidine-DNA glycosylase (270 aa).

The Schiff-base intermediate with DNA role is filled by Pro2. Catalysis depends on Glu3, which acts as the Proton donor. The active-site Proton donor; for beta-elimination activity is Lys59. DNA contacts are provided by His91, Arg110, and Lys151. An FPG-type zinc finger spans residues 236-270 (RVYGRDKEPCVTCGQQVKSKVLGGRNTFWCSRCQK). Catalysis depends on Arg260, which acts as the Proton donor; for delta-elimination activity.

It belongs to the FPG family. In terms of assembly, monomer. Zn(2+) serves as cofactor.

It catalyses the reaction Hydrolysis of DNA containing ring-opened 7-methylguanine residues, releasing 2,6-diamino-4-hydroxy-5-(N-methyl)formamidopyrimidine.. The catalysed reaction is 2'-deoxyribonucleotide-(2'-deoxyribose 5'-phosphate)-2'-deoxyribonucleotide-DNA = a 3'-end 2'-deoxyribonucleotide-(2,3-dehydro-2,3-deoxyribose 5'-phosphate)-DNA + a 5'-end 5'-phospho-2'-deoxyribonucleoside-DNA + H(+). Its function is as follows. Involved in base excision repair of DNA damaged by oxidation or by mutagenic agents. Acts as a DNA glycosylase that recognizes and removes damaged bases. Has a preference for oxidized purines, such as 7,8-dihydro-8-oxoguanine (8-oxoG). Has AP (apurinic/apyrimidinic) lyase activity and introduces nicks in the DNA strand. Cleaves the DNA backbone by beta-delta elimination to generate a single-strand break at the site of the removed base with both 3'- and 5'-phosphates. This is Formamidopyrimidine-DNA glycosylase from Bdellovibrio bacteriovorus (strain ATCC 15356 / DSM 50701 / NCIMB 9529 / HD100).